Here is a 408-residue protein sequence, read N- to C-terminus: Bifunctional polynucleotide phosphatase/kinase (408 aa).

The interval 1 to 38 (MSSKKRKSPPQESLTSYFEKSSKSSKKYGSQNKDSDSS) is disordered. The residue at position 8 (serine 8) is a Phosphoserine. 2 stretches are compositionally biased toward polar residues: residues 10–19 (PQESLTSYFE) and 28–38 (YGSQNKDSDSS). 263–270 (GFPSSGKS) contributes to the ATP binding site.

This sequence in the N-terminal section; belongs to the DNA 3' phosphatase family.

Its subcellular location is the nucleus. It carries out the reaction a 3'end (2'-deoxyribonucleotide 3'-phosphate)-DNA + H2O = a 3'-end 2'-deoxyribonucleotide-DNA + phosphate. The catalysed reaction is a 5'-end dephospho-2'-deoxyribonucleoside-DNA + ATP = a 5'-end 5'-phospho-2'-deoxyribonucleoside-DNA + ADP + H(+). Catalyzes the phosphorylation of DNA at 5'-hydroxyl termini and can dephosphorylate its 3'-phosphate termini. Has a role in the repair of breaks in single-stranded DNA. This chain is Bifunctional polynucleotide phosphatase/kinase (pnk1), found in Schizosaccharomyces pombe (strain 972 / ATCC 24843) (Fission yeast).